The primary structure comprises 328 residues: Flagellar motor switch protein FliM (328 aa).

An interaction with unphosphorylated CheY region spans residues 1-45 (MSDVLSQEEINQLIEALMKGELKEEDLLKEEEEKKVKPYDFKRPS).

It belongs to the FliM family. Interacts (via N-terminus) with unphosphorylated CheY. Interacts (via central domain) with FliG (via central domain or via central domain and C-terminus).

It localises to the cell inner membrane. The protein resides in the bacterial flagellum basal body. Its function is as follows. FliM is one of three proteins (FliG, FliN, FliM) that forms the rotor-mounted switch complex (C ring), located at the base of the basal body. This complex interacts with the CheY and CheX chemotaxis proteins, in addition to contacting components of the motor that determine the direction of flagellar rotation. The polypeptide is Flagellar motor switch protein FliM (Thermotoga maritima (strain ATCC 43589 / DSM 3109 / JCM 10099 / NBRC 100826 / MSB8)).